Consider the following 702-residue polypeptide: Dynein intermediate chain 2, ciliary (702 aa).

Residues 1–11 show a composition bias toward low complexity; it reads MPVKSTKTKGG. Disordered stretches follow at residues 1 to 64, 128 to 226, and 243 to 272; these read MPVK…IKPD, DEAR…FSST, and QEKA…ETQS. 2 stretches are compositionally biased toward basic and acidic residues: residues 36–52 and 152–176; these read GKKD…HGGE and GEEK…RDEE. Over residues 189–206 the composition is skewed to polar residues; it reads KLTNQFNFSERASQTYNN. The segment covering 243–261 has biased composition (basic and acidic residues); the sequence is QEKAKEKKAAPSKKDDDKS. WD repeat units follow at residues 380 to 420, 429 to 472, 490 to 533, 537 to 577, 580 to 620, and 628 to 667; these read PTDS…ANPV, KHTD…LTYT, TQLT…QFLD, AHHM…GPMF, DLGS…YEPI, and KKKT…RKVP.

It belongs to the dynein intermediate chain family. As to quaternary structure, consists of at least two heavy chains (alpha and beta), three intermediate chains and several light chains.

It is found in the cytoplasm. Its subcellular location is the cytoskeleton. The protein localises to the cilium axoneme. Microtubule-binding protein that may be involved in dynein outer arm assembly on the axoneme. This chain is Dynein intermediate chain 2, ciliary, found in Heliocidaris crassispina (Sea urchin).